A 232-amino-acid polypeptide reads, in one-letter code: Protein Mis18-alpha (232 aa).

S36, S39, and S40 each carry phosphoserine. The Mis18 domain maps to 79-177; the sequence is PLVFLCSGCR…SVEAIESYIL (99 aa). Zn(2+)-binding residues include C84, C87, C140, and C143. K161 is covalently cross-linked (Glycyl lysine isopeptide (Lys-Gly) (interchain with G-Cter in SUMO2)). S232 carries the phosphoserine modification.

This sequence belongs to the mis18 family. Homodimer, and heterodimer with OIP5/MIS18B. Identified in a complex containing MIS18A, OIP5/MIS18B, MIS18BP1, RBBP7 and RBBP4.

It is found in the nucleus. Its subcellular location is the chromosome. The protein resides in the centromere. Its function is as follows. Required for recruitment of CENPA to centromeres and normal chromosome segregation during mitosis. The protein is Protein Mis18-alpha (MIS18A) of Otolemur garnettii (Small-eared galago).